The sequence spans 3336 residues: Pericentrin (3336 aa).

Disordered regions lie at residues 1–71 (MEVE…DICK) and 81–100 (GAGG…KRED). Over residues 27 to 37 (TKGDSSHSEKK) the composition is skewed to basic and acidic residues. S44 is modified (phosphoserine). S188 carries the phosphoserine modification. Residue T191 is modified to Phosphothreonine. Positions 258–553 (HTAQLELTQA…RLQGAREDAL (296 aa)) form a coiled coil. The disordered stretch occupies residues 569-589 (KPEKGRKDHVDELEPERHKES). Phosphoserine is present on residues S610 and S682. 2 coiled-coil regions span residues 675–835 (TEHK…DALH) and 1010–1146 (TILT…MLKA). A Phosphoserine modification is found at S1245. A coiled-coil region spans residues 1299–1949 (NEETAQVVRK…FLRCQVELDR (651 aa)). The tract at residues 1619 to 1638 (TLDAGRCPEPPSGSPPEGPE) is disordered. Pro residues predominate over residues 1626-1636 (PEPPSGSPPEG). Phosphoserine occurs at positions 1653 and 1712. The segment at 1954–1974 (RATAHTRVPGAHPQPRMDGGA) is disordered. S2044 carries the post-translational modification Phosphoserine. Residues 2064–2082 (VDLVAQVKQLQEKLNRLLY) are a coiled coil. Residues 2168 to 2214 (SLIPDEMPDSPIQEKSECQDMSLSSPTSVLGGSRHQSHTAEAGPRKS) form a disordered region. 5 positions are modified to phosphoserine: S2177, S2192, S2225, S2226, and S2327. The span at 2186-2197 (QDMSLSSPTSVL) shows a compositional bias: polar residues. The tract at residues 2318–2374 (SFDSQETLSSPPPGLEGKADRSEKSDGSGFGARLSPGSGGPEAQTAGPVTPASISGR) is disordered. Residues 2334–2343 (GKADRSEKSD) show a composition bias toward basic and acidic residues. Phosphoserine occurs at positions 2352, 2355, 2477, and 2486. Residues 2536-3086 (QEKLQHLRTA…EKLLKHHLQK (551 aa)) adopt a coiled-coil conformation. Disordered stretches follow at residues 2875-2910 (LEQS…WRKW) and 3084-3126 (LQKG…EEAH). Composition is skewed to basic and acidic residues over residues 2876–2896 (EQSH…RSAE) and 3092–3102 (RSERSAWKPDE). Positions 2983-3246 (LSAARLLTSF…ARQPQSPPRT (264 aa)) are interaction with NEK2. The interval 3195–3208 (RFRTAVRVVIAILR) is calmodulin-binding. Residues 3224–3300 (ALAQGKAPRP…RSLTASQDPE (77 aa)) form a disordered region. Low complexity predominate over residues 3226 to 3240 (AQGKAPRPGPRARQP). A compositionally biased stretch (polar residues) spans 3283–3297 (PSPNSRLERSLTASQ). Position 3302 is a phosphoserine (S3302).

In terms of assembly, interacts with CHD3. Interacts with CHD4; the interaction regulates centrosome integrity. Interacts with DISC1 and PCM1. Binds calmodulin. Interacts with CDK5RAP2; the interaction is leading to centrosomal localization of PCNT and CDK5RAP2. Interacts with isoform 1 of NEK2. Interacts with CEP131. Interacts with CCDC13. Interacts with CEP68. Interacts with ATF5; the ATF5:PCNT:polyglutamylated tubulin (PGT) tripartite unites the mother centriole and the pericentriolar material (PCM) in the centrosome. Post-translationally, cleaved during mitotis which leads to removal of CDK5RAP2 from the centrosome and promotes centriole disengagement and subsequent centriole separation. The C-terminal fragment is rapidly degraded following cleavage. Ubiquitinated by TRIM43; leading to proteasomal degradation. As to expression, expressed in all tissues tested, including placenta, liver, kidney and thymus.

Its subcellular location is the cytoplasm. The protein resides in the cytoskeleton. It is found in the microtubule organizing center. The protein localises to the centrosome. Functionally, integral component of the filamentous matrix of the centrosome involved in the initial establishment of organized microtubule arrays in both mitosis and meiosis. Plays a role, together with DISC1, in the microtubule network formation. Is an integral component of the pericentriolar material (PCM). May play an important role in preventing premature centrosome splitting during interphase by inhibiting NEK2 kinase activity at the centrosome. This Homo sapiens (Human) protein is Pericentrin (PCNT).